We begin with the raw amino-acid sequence, 476 residues long: NADH-quinone oxidoreductase subunit N (476 aa).

13 helical membrane-spanning segments follow: residues 7 to 27 (LTVE…GLLV), 33 to 53 (RGIA…AFGM), 59 to 79 (VVLG…LFLV), 100 to 120 (GEYY…ASSG), 122 to 142 (LVSL…LAAF), 156 to 176 (YVLL…LVYG), 199 to 219 (LLLG…AVPF), 237 to 257 (FLSV…FFGA), 265 to 285 (WVQL…LVAI), 305 to 325 (LLLG…YYAM), 363 to 383 (VAAL…MAGF), 399 to 419 (IWLA…YLLV), and 437 to 457 (VAPG…ILGI).

It belongs to the complex I subunit 2 family. As to quaternary structure, NDH-1 is composed of 14 different subunits. Subunits NuoA, H, J, K, L, M, N constitute the membrane sector of the complex.

It localises to the cell membrane. The catalysed reaction is a quinone + NADH + 5 H(+)(in) = a quinol + NAD(+) + 4 H(+)(out). NDH-1 shuttles electrons from NADH, via FMN and iron-sulfur (Fe-S) centers, to quinones in the respiratory chain. The immediate electron acceptor for the enzyme in this species is believed to be a menaquinone. Couples the redox reaction to proton translocation (for every two electrons transferred, four hydrogen ions are translocated across the cytoplasmic membrane), and thus conserves the redox energy in a proton gradient. This Moorella thermoacetica (strain ATCC 39073 / JCM 9320) protein is NADH-quinone oxidoreductase subunit N.